The primary structure comprises 276 residues: Type II pantothenate kinase (276 aa).

8 to 15 (DAGGTLTK) serves as a coordination point for ATP. The Proton acceptor role is filled by glutamate 76. Residues threonine 105, 127 to 131 (GGTIM), phenylalanine 143, and serine 230 each bind ATP.

This sequence belongs to the type II pantothenate kinase family. As to quaternary structure, homodimer.

The protein localises to the cytoplasm. It carries out the reaction (R)-pantothenate + ATP = (R)-4'-phosphopantothenate + ADP + H(+). It participates in cofactor biosynthesis; coenzyme A biosynthesis; CoA from (R)-pantothenate: step 1/5. Catalyzes the phosphorylation of pantothenate (Pan), the first step in CoA biosynthesis. The sequence is that of Type II pantothenate kinase from Bacillus thuringiensis subsp. konkukian (strain 97-27).